Reading from the N-terminus, the 388-residue chain is Probable RNA-binding protein sce3 (388 aa).

The disordered stretch occupies residues 18 to 84; the sequence is ESFGSTNWAD…GGMGSGYQRD (67 aa). The segment covering 38–50 has biased composition (polar residues); the sequence is DRTTSTYRATPSS. Phosphoserine is present on residues Ser49, Ser50, and Ser60. At Thr61 the chain carries Phosphothreonine. A phosphoserine mark is found at Ser64, Ser67, and Ser71. The 76-residue stretch at 94–169 folds into the RRM domain; the sequence is FTAHVGNLSF…RPVRITVAEP (76 aa). A compositionally biased stretch (basic and acidic residues) spans 171–185; that stretch reads RSFAREERSTGDWVR. The tract at residues 171–388 is disordered; it reads RSFAREERST…WTKIGKGRKH (218 aa). Phosphoserine is present on Ser197. Positions 208–229 are enriched in basic and acidic residues; that stretch reads RFRDPARDPSDRVREEPREWVR. Polar residues predominate over residues 248-257; sequence PRSSSNVNTE. Ser250, Ser251, and Ser252 each carry phosphoserine. Positions 258–268 are enriched in low complexity; it reads ATPSATTTTSS. A compositionally biased stretch (basic and acidic residues) spans 289–349; that stretch reads RVEEKLAKRT…LGDGEKKSSE (61 aa). Residue Ser347 is modified to Phosphoserine.

It is found in the cytoplasm. In Schizosaccharomyces pombe (strain 972 / ATCC 24843) (Fission yeast), this protein is Probable RNA-binding protein sce3 (sce3).